The sequence spans 209 residues: Mediator of RNA polymerase II transcription subunit 20 (209 aa).

It belongs to the Mediator complex subunit 20 family. In terms of assembly, component of the Mediator complex.

The protein localises to the nucleus. Component of the Mediator complex, a coactivator involved in the regulated transcription of nearly all RNA polymerase II-dependent genes. Mediator functions as a bridge to convey information from gene-specific regulatory proteins to the basal RNA polymerase II transcription machinery. Mediator is recruited to promoters by direct interactions with regulatory proteins and serves as a scaffold for the assembly of a functional preinitiation complex with RNA polymerase II and the general transcription factors. This is Mediator of RNA polymerase II transcription subunit 20 (SRB2) from Eremothecium gossypii (strain ATCC 10895 / CBS 109.51 / FGSC 9923 / NRRL Y-1056) (Yeast).